A 374-amino-acid polypeptide reads, in one-letter code: Chaperone protein DnaJ (374 aa).

The J domain maps to 5-69; sequence NYYQILGVSK…QKRAAYDRLG (65 aa). Residues 137 to 215 form a CR-type zinc finger; sequence GIEKNISFSS…CHGMGRYHKQ (79 aa). Positions 150, 153, 167, 170, 189, 192, 203, and 206 each coordinate Zn(2+). CXXCXGXG motif repeat units follow at residues 150 to 157, 167 to 174, 189 to 196, and 203 to 210; these read CDTCHGSG, CDACSGVG, CHKCQGNG, and CKKCHGMG.

The protein belongs to the DnaJ family. Homodimer. Zn(2+) is required as a cofactor.

It is found in the cytoplasm. Participates actively in the response to hyperosmotic and heat shock by preventing the aggregation of stress-denatured proteins and by disaggregating proteins, also in an autonomous, DnaK-independent fashion. Unfolded proteins bind initially to DnaJ; upon interaction with the DnaJ-bound protein, DnaK hydrolyzes its bound ATP, resulting in the formation of a stable complex. GrpE releases ADP from DnaK; ATP binding to DnaK triggers the release of the substrate protein, thus completing the reaction cycle. Several rounds of ATP-dependent interactions between DnaJ, DnaK and GrpE are required for fully efficient folding. Also involved, together with DnaK and GrpE, in the DNA replication of plasmids through activation of initiation proteins. In Rickettsia massiliae (strain Mtu5), this protein is Chaperone protein DnaJ.